The primary structure comprises 132 residues: Small ribosomal subunit protein bS6 (132 aa).

The protein belongs to the bacterial ribosomal protein bS6 family.

Its function is as follows. Binds together with bS18 to 16S ribosomal RNA. The sequence is that of Small ribosomal subunit protein bS6 from Chlorobium chlorochromatii (strain CaD3).